Reading from the N-terminus, the 490-residue chain is GTPase Der (490 aa).

EngA-type G domains follow at residues 1 to 165 (MRIA…QIPV) and 227 to 400 (LKVA…TIAT). GTP contacts are provided by residues 7–14 (GRPNVGKS), 54–58 (DTGGV), 117–120 (NKAD), 233–240 (GHPNVGKS), 280–284 (DTAGL), and 345–348 (NKWD). The KH-like domain occupies 401–485 (TKLSTSLVNK…PFDLEYKAKP (85 aa)).

This sequence belongs to the TRAFAC class TrmE-Era-EngA-EngB-Septin-like GTPase superfamily. EngA (Der) GTPase family. As to quaternary structure, associates with the 50S ribosomal subunit.

Functionally, GTPase that plays an essential role in the late steps of ribosome biogenesis. The polypeptide is GTPase Der (Chlamydia trachomatis serovar A (strain ATCC VR-571B / DSM 19440 / HAR-13)).